We begin with the raw amino-acid sequence, 292 residues long: mRNA export protein 33 (292 aa).

A disordered region spans residues 1–76 (MPPKKAAKGK…RKRREEEKRA (76 aa)). Composition is skewed to basic and acidic residues over residues 9–26 (GKGDPGKAAKKDPTKKAA) and 58–76 (KDAKRQEALRKRREEEKRA). A C3H1-type zinc finger spans residues 134–172 (INTDIVCKFFLEACETGKYGWLWQCPNGNMTCIYKHALP).

The protein localises to the cytoplasm. Its function is as follows. Functions as a component of the nuclear pore complex (NPC). NPC components, collectively referred to as nucleoporins (NUPs), can play the role of both NPC structural components and of docking or interaction partners for transiently associated nuclear transport factors. Active directional transport is assured by both, a Phe-Gly (FG) repeat affinity gradient for these transport factors across the NPC and a transport cofactor concentration gradient across the nuclear envelope. Involved in the export of mRNA from the nucleus to the cytoplasm. May play a role in mitotic spindle formation and/or function. The chain is mRNA export protein 33 (mep33) from Schizosaccharomyces pombe (strain 972 / ATCC 24843) (Fission yeast).